The following is a 65-amino-acid chain: Large ribosomal subunit protein bL35 (65 aa).

The interval 1–21 (MPKMKTKSGAAKRFTVRAGGT) is disordered.

This sequence belongs to the bacterial ribosomal protein bL35 family.

In Nitrosospira multiformis (strain ATCC 25196 / NCIMB 11849 / C 71), this protein is Large ribosomal subunit protein bL35.